Consider the following 70-residue polypeptide: Large ribosomal subunit protein bL31 (70 aa).

The Zn(2+) site is built by Cys16, Cys18, Cys37, and Cys40.

Belongs to the bacterial ribosomal protein bL31 family. Type A subfamily. Part of the 50S ribosomal subunit. Zn(2+) serves as cofactor.

In terms of biological role, binds the 23S rRNA. In Shewanella baltica (strain OS223), this protein is Large ribosomal subunit protein bL31.